The primary structure comprises 394 residues: Probable fimbrial assembly protein FimD, serogroup H1 (394 aa).

This chain is Probable fimbrial assembly protein FimD, serogroup H1 (fimD), found in Dichelobacter nodosus (Bacteroides nodosus).